The following is a 457-amino-acid chain: Siroheme synthase (457 aa).

A precorrin-2 dehydrogenase /sirohydrochlorin ferrochelatase region spans residues 1–204 (MDHLPIFCQL…NDQKAITETT (204 aa)). NAD(+) contacts are provided by residues 22–23 (DV) and 43–44 (LA). Phosphoserine is present on Ser-128. The tract at residues 216–457 (GEVVLVGAGP…RDKLNWFSNH (242 aa)) is uroporphyrinogen-III C-methyltransferase. Pro-225 contributes to the S-adenosyl-L-methionine binding site. The active-site Proton acceptor is Asp-248. The Proton donor role is filled by Lys-270. Residues 301-303 (GGD), Ile-306, 331-332 (TA), Met-382, and Gly-411 contribute to the S-adenosyl-L-methionine site.

The protein in the N-terminal section; belongs to the precorrin-2 dehydrogenase / sirohydrochlorin ferrochelatase family. This sequence in the C-terminal section; belongs to the precorrin methyltransferase family.

The catalysed reaction is uroporphyrinogen III + 2 S-adenosyl-L-methionine = precorrin-2 + 2 S-adenosyl-L-homocysteine + H(+). The enzyme catalyses precorrin-2 + NAD(+) = sirohydrochlorin + NADH + 2 H(+). It catalyses the reaction siroheme + 2 H(+) = sirohydrochlorin + Fe(2+). It participates in cofactor biosynthesis; adenosylcobalamin biosynthesis; precorrin-2 from uroporphyrinogen III: step 1/1. It functions in the pathway cofactor biosynthesis; adenosylcobalamin biosynthesis; sirohydrochlorin from precorrin-2: step 1/1. Its pathway is porphyrin-containing compound metabolism; siroheme biosynthesis; precorrin-2 from uroporphyrinogen III: step 1/1. The protein operates within porphyrin-containing compound metabolism; siroheme biosynthesis; siroheme from sirohydrochlorin: step 1/1. It participates in porphyrin-containing compound metabolism; siroheme biosynthesis; sirohydrochlorin from precorrin-2: step 1/1. In terms of biological role, multifunctional enzyme that catalyzes the SAM-dependent methylations of uroporphyrinogen III at position C-2 and C-7 to form precorrin-2 via precorrin-1. Then it catalyzes the NAD-dependent ring dehydrogenation of precorrin-2 to yield sirohydrochlorin. Finally, it catalyzes the ferrochelation of sirohydrochlorin to yield siroheme. The polypeptide is Siroheme synthase (Escherichia coli O157:H7 (strain EC4115 / EHEC)).